The sequence spans 477 residues: Protoporphyrinogen oxidase (477 aa).

FAD is bound by residues 9-14 (GGGISG), 34-35 (ES), Trp-42, 57-60 (GPRG), Val-257, Ala-449, and 454-456 (VAV).

The protein belongs to the protoporphyrinogen/coproporphyrinogen oxidase family. Protoporphyrinogen oxidase subfamily. As to quaternary structure, monomer. Homodimer. It depends on FAD as a cofactor. Expressed in heart, brain, placenta, lung, liver, skeletal muscle, kidney and pancreas.

It localises to the mitochondrion inner membrane. The enzyme catalyses protoporphyrinogen IX + 3 O2 = protoporphyrin IX + 3 H2O2. The protein operates within porphyrin-containing compound metabolism; protoporphyrin-IX biosynthesis; protoporphyrin-IX from protoporphyrinogen-IX: step 1/1. In terms of biological role, catalyzes the 6-electron oxidation of protoporphyrinogen-IX to form protoporphyrin-IX. The protein is Protoporphyrinogen oxidase (PPOX) of Homo sapiens (Human).